We begin with the raw amino-acid sequence, 216 residues long: MSSLVTPQHAEELSTGARQLGVELSAEHHEKLLGYLALLIKWNKAYNLTAVRDPDEMVSRHLLDSLSVMSFIHNERDNWLDVGSGGGMPGIPLAILHPHKRVTVLDANGKKTRFLTQVKMELKLDNLTVIHSRVEAFQPAQPFDGIISRAFSSMENFTNWTRHLGDTGTQWLAMKGLHPADELVALPADFTVESEQALTVPGCQGQRHLLILRRKA.

S-adenosyl-L-methionine-binding positions include G83, M88, 134-135, and R149; that span reads VE.

Belongs to the methyltransferase superfamily. RNA methyltransferase RsmG family.

It is found in the cytoplasm. The enzyme catalyses guanosine(527) in 16S rRNA + S-adenosyl-L-methionine = N(7)-methylguanosine(527) in 16S rRNA + S-adenosyl-L-homocysteine. Functionally, specifically methylates the N7 position of guanine in position 527 of 16S rRNA. The protein is Ribosomal RNA small subunit methyltransferase G of Pseudomonas putida (strain GB-1).